The sequence spans 107 residues: Flagellar hook-basal body complex protein FliE (107 aa).

Belongs to the FliE family.

Its subcellular location is the bacterial flagellum basal body. In Cupriavidus pinatubonensis (strain JMP 134 / LMG 1197) (Cupriavidus necator (strain JMP 134)), this protein is Flagellar hook-basal body complex protein FliE.